Consider the following 103-residue polypeptide: NAD(P)H-quinone oxidoreductase subunit 4L, organellar chromatophore (103 aa).

3 helical membrane passes run 3 to 23 (IMLE…VWGL), 32 to 52 (VLMS…AFSN), and 63 to 83 (VFAI…LAIL).

The protein belongs to the complex I subunit 4L family. As to quaternary structure, NDH is composed of at least 16 different subunits, 5 of which are encoded in the nucleus.

The protein resides in the plastid. It is found in the organellar chromatophore thylakoid membrane. It catalyses the reaction a plastoquinone + NADH + (n+1) H(+)(in) = a plastoquinol + NAD(+) + n H(+)(out). It carries out the reaction a plastoquinone + NADPH + (n+1) H(+)(in) = a plastoquinol + NADP(+) + n H(+)(out). Its function is as follows. NDH shuttles electrons from NAD(P)H:plastoquinone, via FMN and iron-sulfur (Fe-S) centers, to quinones in the photosynthetic chain and possibly in a chloroplast respiratory chain. The immediate electron acceptor for the enzyme in this species is believed to be plastoquinone. Couples the redox reaction to proton translocation, and thus conserves the redox energy in a proton gradient. This is NAD(P)H-quinone oxidoreductase subunit 4L, organellar chromatophore from Paulinella chromatophora.